Here is a 724-residue protein sequence, read N- to C-terminus: 4-alpha-glucanotransferase (724 aa).

The protein belongs to the disproportionating enzyme family.

It localises to the cytoplasm. The enzyme catalyses Transfers a segment of a (1-&gt;4)-alpha-D-glucan to a new position in an acceptor, which may be glucose or a (1-&gt;4)-alpha-D-glucan.. The protein is 4-alpha-glucanotransferase (malQ) of Mycobacterium bovis (strain ATCC BAA-935 / AF2122/97).